The primary structure comprises 332 residues: 2,3-diketo-L-gulonate reductase (332 aa).

Histidine 44 acts as the Proton donor in catalysis. NAD(+) is bound by residues isoleucine 168 to serine 174, tryptophan 224 to lysine 225, and glycine 304 to glutamate 306.

Belongs to the LDH2/MDH2 oxidoreductase family. DlgD subfamily. In terms of assembly, homodimer.

Its subcellular location is the cytoplasm. It carries out the reaction 3-dehydro-L-gulonate + NAD(+) = 2,3-dioxo-L-gulonate + NADH + H(+). The enzyme catalyses 3-dehydro-L-gulonate + NADP(+) = 2,3-dioxo-L-gulonate + NADPH + H(+). Its function is as follows. Catalyzes the reduction of 2,3-diketo-L-gulonate in the presence of NADH, to form 3-keto-L-gulonate. This is 2,3-diketo-L-gulonate reductase from Escherichia coli O1:K1 / APEC.